The following is a 1783-amino-acid chain: 6-methylsalicylic acid synthase (1783 aa).

The span at 1 to 31 (MITSTSSTEVLTPANGSDDSKGTTTPATSSG) shows a compositional bias: polar residues. The interval 1–40 (MITSTSSTEVLTPANGSDDSKGTTTPATSSGDPEMHDDLL) is disordered. The region spanning 45–474 (HDDVAIIGMA…GTVSHAIIEA (430 aa)) is the Ketosynthase family 3 (KS3) domain. Active-site for beta-ketoacyl synthase activity residues include Cys217, His352, and His394. A malonyl-CoA:ACP transacylase (MAT) domain region spans residues 587 to 884 (WVFSGHGAQW…TPTMVRKQPA (298 aa)). Residue Ser673 is the For acyl/malonyl transferase activity of the active site. The tract at residues 942–1215 (THKPAANDLL…AFAGVEGESL (274 aa)) is product template (PT) domain. The interval 948–1064 (NDLLGTRTAL…ATVGADATPS (117 aa)) is N-terminal hotdog fold. The 269-residue stretch at 948 to 1216 (NDLLGTRTAL…FAGVEGESLS (269 aa)) folds into the PKS/mFAS DH domain. The active-site Proton acceptor; for dehydratase activity is His980. The segment at 1078-1216 (PQKLSDSFSI…FAGVEGESLS (139 aa)) is C-terminal hotdog fold. Asp1130 (proton donor; for dehydratase activity) is an active-site residue. The Carrier domain maps to 1707–1781 (EYVLVVVKKC…HLVEYFCQVL (75 aa)). The residue at position 1741 (Ser1741) is an O-(pantetheine 4'-phosphoryl)serine.

The catalysed reaction is 3 malonyl-CoA + acetyl-CoA + NADPH + 3 H(+) = 6-methylsalicylate + 3 CO2 + NADP(+) + 4 CoA + H2O. It functions in the pathway secondary metabolite biosynthesis; terpenoid biosynthesis. Its function is as follows. Non-reducing polyketide synthase; part of the gene cluster that mediates the biosynthesis of macrophorins, isoprenoid epoxycyclohexenones containing cyclized drimane moieties. The first step of the pathway is the synthesis of 6-methylsalicylic acid (6-MSA) by the polyketide synthase macA. 6-MSA is then converted to m-cresol by the decarboxylase macB. The cytochrome P450 monooxygenase macC then catalyzes the oxidation of m-cresol to toluquinol. Epoxidation of toluquinol is then performed by the short chain dehydrogenase macD, with the help of macE, and a further prenylation by macG leads to 7-deacetoxyyanuthone A. The next step is the hydroxylation of C-22 of 7-deacetoxyyanuthone A by the cytochrome P450 monooxygenase macH to yield 22-deacetylyanuthone A. O-Mevalon transferase macI then attaches mevalon to the hydroxyl group of 22-deacetylyanuthone A to produce yanuthone E. The terpene cyclase macJ catalyzes the cyclization of 22-deacetylyanuthone A to macrophorin A. MacJ is also able to catalyze cyclization of yanuthone E and 7-deacetoxyyanuthone A to their corresponding macrophorins. The macJ products can be further modified by macH and macJ, as well as by the FAD-dependent monooxygenase macF, to produce additional macrophorins, including 4'-oxomacrophorin A, 4'-oxomacrophorin D and 4'-oxomacrophorin E. The polypeptide is 6-methylsalicylic acid synthase (Penicillium terrestre).